The sequence spans 456 residues: Endoglucanase A (456 aa).

An N-terminal signal peptide occupies residues 1–30; the sequence is MSRIRRFLATALAAATAGVGAIVTAIASAG. Residues 31–322 form a catalytic region; the sequence is PAHAYDSPFY…RAYELAMNAA (292 aa). The active site involves aspartate 113. 2 cysteine pairs are disulfide-bonded: cysteine 114-cysteine 159 and cysteine 267-cysteine 302. The active-site Proton donor is the aspartate 151. Residues 255-280 form a disordered region; it reads SRNGNGPLGSEWCDPPGRATGTWSTT. Residue aspartate 300 is the Nucleophile of the active site. Residues 321-358 form a disordered region; the sequence is AAPPTYSPSPTPSTPSPSPSQSDPGSPSPSPSQPPAGR. Residues 323–355 form a linker ('hinge') (Pro-Ser box) region; it reads PPTYSPSPTPSTPSPSPSQSDPGSPSPSPSQPP. Residues 325 to 338 are compositionally biased toward pro residues; that stretch reads TYSPSPTPSTPSPS. The 104-residue stretch at 353 to 456 folds into the CBM2 domain; it reads QPPAGRACEA…LSSSITCSAS (104 aa). The cysteines at positions 360 and 453 are disulfide-linked.

This sequence belongs to the glycosyl hydrolase 6 (cellulase B) family.

It catalyses the reaction Endohydrolysis of (1-&gt;4)-beta-D-glucosidic linkages in cellulose, lichenin and cereal beta-D-glucans.. The polypeptide is Endoglucanase A (celA) (Thermobispora bispora (Microbispora bispora)).